A 191-amino-acid polypeptide reads, in one-letter code: Inosine triphosphate pyrophosphatase (191 aa).

9-14 (TGNAKK) provides a ligand contact to ITP. Residue Glu-39 participates in Mg(2+) binding. Residues Lys-51, 67-68 (DT), Lys-84, 143-146 (FGWD), Lys-166, and 171-172 (HR) each bind ITP.

The protein belongs to the HAM1 NTPase family. Homodimer. It depends on Mg(2+) as a cofactor. Requires Mn(2+) as cofactor.

The protein resides in the cytoplasm. It catalyses the reaction ITP + H2O = IMP + diphosphate + H(+). It carries out the reaction dITP + H2O = dIMP + diphosphate + H(+). The catalysed reaction is XTP + H2O = XMP + diphosphate + H(+). Pyrophosphatase that hydrolyzes non-canonical purine nucleotides such as inosine triphosphate (ITP), deoxyinosine triphosphate (dITP) or xanthosine 5'-triphosphate (XTP) to their respective monophosphate derivatives. The enzyme does not distinguish between the deoxy- and ribose forms. Probably excludes non-canonical purines from RNA and DNA precursor pools, thus preventing their incorporation into RNA and DNA and avoiding chromosomal lesions. This chain is Inosine triphosphate pyrophosphatase, found in Drosophila melanogaster (Fruit fly).